The chain runs to 492 residues: Bifunctional purine biosynthesis protein PurH (492 aa).

The MGS-like domain occupies 1–144 (MKKAILSVSN…KNYKHVTTIV (144 aa)).

The protein belongs to the PurH family.

It carries out the reaction (6R)-10-formyltetrahydrofolate + 5-amino-1-(5-phospho-beta-D-ribosyl)imidazole-4-carboxamide = 5-formamido-1-(5-phospho-D-ribosyl)imidazole-4-carboxamide + (6S)-5,6,7,8-tetrahydrofolate. The enzyme catalyses IMP + H2O = 5-formamido-1-(5-phospho-D-ribosyl)imidazole-4-carboxamide. It functions in the pathway purine metabolism; IMP biosynthesis via de novo pathway; 5-formamido-1-(5-phospho-D-ribosyl)imidazole-4-carboxamide from 5-amino-1-(5-phospho-D-ribosyl)imidazole-4-carboxamide (10-formyl THF route): step 1/1. The protein operates within purine metabolism; IMP biosynthesis via de novo pathway; IMP from 5-formamido-1-(5-phospho-D-ribosyl)imidazole-4-carboxamide: step 1/1. The polypeptide is Bifunctional purine biosynthesis protein PurH (Staphylococcus aureus (strain MSSA476)).